The following is a 201-amino-acid chain: Putative 3-methyladenine DNA glycosylase (201 aa).

The protein belongs to the DNA glycosylase MPG family.

This Clostridium novyi (strain NT) protein is Putative 3-methyladenine DNA glycosylase.